A 1103-amino-acid polypeptide reads, in one-letter code: Ubiquitin carboxyl-terminal hydrolase 7 (1103 aa).

Residues Met-1–Gln-11 show a composition bias toward low complexity. The segment at Met-1–Asn-40 is disordered. An interaction with TSPYL5 region spans residues Met-1 to Lys-209. Residue Ser-19 is modified to Phosphoserine. Positions Glu-20 to Asp-32 are enriched in acidic residues. Phosphoserine occurs at positions 50 and 54. Positions Ser-54–Lys-209 are interaction with p53/TP53 and MDM2. Residues Glu-69 to Val-196 form the MATH domain. The tract at residues Thr-71–Trp-206 is necessary for nuclear localization. The 308-residue stretch at Val-215–Glu-522 folds into the USP domain. Residue Cys-224 is the Nucleophile of the active site. The Proton acceptor role is filled by His-465. Lys-870 bears the N6-acetyllysine; alternate mark. Lys-870 is covalently cross-linked (Glycyl lysine isopeptide (Lys-Gly) (interchain with G-Cter in SUMO2); alternate). A Glycyl lysine isopeptide (Lys-Gly) (interchain with G-Cter in ubiquitin); alternate cross-link involves residue Lys-870. A Glycyl lysine isopeptide (Lys-Gly) (interchain with G-Cter in SUMO2) cross-link involves residue Lys-883. Ser-964 is modified (phosphoserine). 2 positions are modified to N6-acetyllysine: Lys-1085 and Lys-1097.

Belongs to the peptidase C19 family. In terms of assembly, monomer. Homodimer. Part of a complex with DAXX, MDM2, RASSF1 and USP7. Part of a complex with DAXX, MDM2 and USP7. Interacts with MDM2; the interaction is independent of p53/TP53. Interacts with DAXX; the interaction is direct and independent of MDM2 and p53/TP53. Component of a complex composed of KMT2E, OGT and USP7; the complex stabilizes KMT2E, preventing KMT2E ubiquitination and proteasomal-mediated degradation. Interacts (via MATH domain) with KMT2E. Interacts with OGT. Interacts with FOXO4; the interaction is enhanced in presence of hydrogen peroxide and occurs independently of p53/TP53. Interacts with p53/TP53; the interaction is enhanced in response to DNA damage; the interaction is impaired by TSPYL5. Interacts with PTEN; the interaction is direct. Interacts with ATXN1 and the strength of interaction is influenced by the length of the poly-Gln region in ATXN1. A weaker interaction seen with mutants having longer poly-Gln regions. Interacts with KIAA1530/UVSSA. Interacts with MEX3C and antagonizes its ability to degrade mRNA. Interacts with DNMT1 and UHRF1. Interacts with FOXP3. Interacts (via MATH domain) with RNF220. Associated component of the Polycomb group (PcG) multiprotein PRC1-like complex. Interacts with EPOP. Interacts with OTUD4 and USP9X; the interaction is direct. Interacts with CRY2. Interacts with REST. Interacts with ERCC6. Part of a complex consisting of USP7, MAGEL2 and TRIM27; directly interacts with MAGEL2; directly interacts with TRIM27. In terms of processing, polyneddylated. Not sumoylated. Post-translationally, ubiquitinated at Lys-870. Polyubiquitinated. Strongly expressed in the testis, spleen and brain. Weakly expressed in the stomach, small intestine, skeletal muscle and uterus.

Its subcellular location is the nucleus. It is found in the cytoplasm. The protein localises to the PML body. The protein resides in the chromosome. The enzyme catalyses Thiol-dependent hydrolysis of ester, thioester, amide, peptide and isopeptide bonds formed by the C-terminal Gly of ubiquitin (a 76-residue protein attached to proteins as an intracellular targeting signal).. Hydrolase that deubiquitinates target proteins such as ARMC5, FOXO4, DEPTOR, KAT5, p53/TP53, MDM2, ERCC6, DNMT1, UHRF1, PTEN, KMT2E/MLL5 and DAXX. Together with DAXX, prevents MDM2 self-ubiquitination and enhances the E3 ligase activity of MDM2 towards p53/TP53, thereby promoting p53/TP53 ubiquitination and proteasomal degradation. Deubiquitinates p53/TP53, preventing degradation of p53/TP53, and enhances p53/TP53-dependent transcription regulation, cell growth repression and apoptosis. Deubiquitinates p53/TP53 and MDM2 and strongly stabilizes p53/TP53 even in the presence of excess MDM2, and also induces p53/TP53-dependent cell growth repression and apoptosis. Deubiquitination of FOXO4 in presence of hydrogen peroxide is not dependent on p53/TP53 and inhibits FOXO4-induced transcriptional activity. In association with DAXX, is involved in the deubiquitination and translocation of PTEN from the nucleus to the cytoplasm, both processes that are counteracted by PML. Deubiquitinates KMT2E preventing KMT2E proteasomal-mediated degradation. Involved in cell proliferation during early embryonic development. Involved in transcription-coupled nucleotide excision repair (TC-NER) in response to UV damage: recruited to DNA damage sites following interaction with KIAA1530/UVSSA and promotes deubiquitination of ERCC6, preventing UV-induced degradation of ERCC6. Involved in maintenance of DNA methylation via its interaction with UHRF1 and DNMT1: acts by mediating deubiquitination of UHRF1 and DNMT1, preventing their degradation and promoting DNA methylation by DNMT1. Deubiquitinates alkylation repair enzyme ALKBH3. OTUD4 recruits USP7 and USP9X to stabilize ALKBH3, thereby promoting the repair of alkylated DNA lesions. Acts as a chromatin regulator via its association with the Polycomb group (PcG) multiprotein PRC1-like complex; may act by deubiquitinating components of the PRC1-like complex. Able to mediate deubiquitination of histone H2B; it is however unsure whether this activity takes place in vivo. Exhibits a preference towards 'Lys-48'-linked ubiquitin chains. Increases regulatory T-cells (Treg) suppressive capacity by deubiquitinating and stabilizing transcription factor FOXP3 which is crucial for Treg cell function. Plays a role in the maintenance of the circadian clock periodicity via deubiquitination and stabilization of the CRY1 and CRY2 proteins. Deubiquitinates REST, thereby stabilizing REST and promoting the maintenance of neural progenitor cells. Deubiquitinates SIRT7, inhibiting SIRT7 histone deacetylase activity and regulating gluconeogenesis. Involved in the regulation of WASH-dependent actin polymerization at the surface of endosomes and the regulation of endosomal protein recycling. It maintains optimal WASH complex activity and precise F-actin levels via deubiquitination of TRIM27 and WASHC1. Mediates the deubiquitination of phosphorylated DEPTOR, promoting its stability and leading to decreased mTORC1 signaling. The protein is Ubiquitin carboxyl-terminal hydrolase 7 (Usp7) of Rattus norvegicus (Rat).